Reading from the N-terminus, the 130-residue chain is Small ribosomal subunit protein uS11 (130 aa).

This sequence belongs to the universal ribosomal protein uS11 family. Part of the 30S ribosomal subunit. Interacts with proteins S7 and S18. Binds to IF-3.

Functionally, located on the platform of the 30S subunit, it bridges several disparate RNA helices of the 16S rRNA. Forms part of the Shine-Dalgarno cleft in the 70S ribosome. The polypeptide is Small ribosomal subunit protein uS11 (Campylobacter hominis (strain ATCC BAA-381 / DSM 21671 / CCUG 45161 / LMG 19568 / NCTC 13146 / CH001A)).